The chain runs to 834 residues: Probable phosphoenolpyruvate synthase (834 aa).

The active-site Tele-phosphohistidine intermediate is the His-447. Arg-550, Arg-598, Glu-699, Gly-720, Ser-721, Asn-722, and Asp-723 together coordinate substrate. Position 699 (Glu-699) interacts with Mg(2+). Asp-723 is a Mg(2+) binding site. Cys-772 functions as the Proton donor in the catalytic mechanism.

The protein belongs to the PEP-utilizing enzyme family. In terms of assembly, homooligomer. Forms a large complex of about 2000 kDa. Mg(2+) is required as a cofactor. The N-terminus is blocked.

It carries out the reaction pyruvate + ATP + H2O = phosphoenolpyruvate + AMP + phosphate + 2 H(+). The protein operates within carbohydrate biosynthesis; gluconeogenesis. Functionally, catalyzes the phosphorylation of pyruvate to phosphoenolpyruvate. The sequence is that of Probable phosphoenolpyruvate synthase (ppsA) from Staphylothermus marinus (strain ATCC 43588 / DSM 3639 / JCM 9404 / F1).